We begin with the raw amino-acid sequence, 711 residues long: DNA topoisomerase 1 (711 aa).

A Toprim domain is found at 3-134; the sequence is KNLVVIESPN…KCQRITFNEI (132 aa). Mg(2+) contacts are provided by Glu9 and Asp102. One can recognise a Topo IA-type catalytic domain in the interval 150–604; it reads DQSWVQSQFA…FWSNFKEEVK (455 aa). The tract at residues 183–188 is interaction with DNA; that stretch reads SAGRVQ. Catalysis depends on Tyr340, which acts as the O-(5'-phospho-DNA)-tyrosine intermediate. 2 C4-type zinc fingers span residues 624-652 and 673-702; these read CPSC…FPNC and CPEC…FPRC.

The protein belongs to the type IA topoisomerase family. Monomer. The cofactor is Mg(2+).

It carries out the reaction ATP-independent breakage of single-stranded DNA, followed by passage and rejoining.. Functionally, releases the supercoiling and torsional tension of DNA, which is introduced during the DNA replication and transcription, by transiently cleaving and rejoining one strand of the DNA duplex. Introduces a single-strand break via transesterification at a target site in duplex DNA. The scissile phosphodiester is attacked by the catalytic tyrosine of the enzyme, resulting in the formation of a DNA-(5'-phosphotyrosyl)-enzyme intermediate and the expulsion of a 3'-OH DNA strand. The free DNA strand then undergoes passage around the unbroken strand, thus removing DNA supercoils. Finally, in the religation step, the DNA 3'-OH attacks the covalent intermediate to expel the active-site tyrosine and restore the DNA phosphodiester backbone. The sequence is that of DNA topoisomerase 1 from Mycoplasma pneumoniae (strain ATCC 29342 / M129 / Subtype 1) (Mycoplasmoides pneumoniae).